The chain runs to 86 residues: Toxin CngtIV (86 aa).

A signal peptide spans 1 to 19 (MNSLLIITACLVLIGTVWA). One can recognise an LCN-type CS-alpha/beta domain in the interval 20–84 (KDGYLVDVKG…TWPLPNKRCG (65 aa)). Cystine bridges form between Cys30–Cys83, Cys34–Cys59, Cys43–Cys64, and Cys47–Cys66.

The protein belongs to the long (4 C-C) scorpion toxin superfamily. Sodium channel inhibitor family. Beta subfamily. In terms of tissue distribution, expressed by the venom gland.

The protein localises to the secreted. In terms of biological role, beta toxins bind voltage-independently at site-4 of sodium channels (Nav) and shift the voltage of activation toward more negative potentials thereby affecting sodium channel activation and promoting spontaneous and repetitive firing. The polypeptide is Toxin CngtIV (Centruroides noxius (Mexican scorpion)).